The following is a 103-amino-acid chain: Large ribosomal subunit protein bL21 (103 aa).

The protein belongs to the bacterial ribosomal protein bL21 family. Part of the 50S ribosomal subunit. Contacts protein L20.

In terms of biological role, this protein binds to 23S rRNA in the presence of protein L20. This is Large ribosomal subunit protein bL21 from Acinetobacter baumannii (strain AB307-0294).